A 377-amino-acid chain; its full sequence is Succinyl-diaminopimelate desuccinylase (377 aa).

A Zn(2+)-binding site is contributed by His-67. Residue Asp-69 is part of the active site. Asp-100 is a binding site for Zn(2+). The active-site Proton acceptor is Glu-134. Residues Glu-135, Glu-163, and His-349 each coordinate Zn(2+).

This sequence belongs to the peptidase M20A family. DapE subfamily. Homodimer. It depends on Zn(2+) as a cofactor. The cofactor is Co(2+).

It carries out the reaction N-succinyl-(2S,6S)-2,6-diaminopimelate + H2O = (2S,6S)-2,6-diaminopimelate + succinate. The protein operates within amino-acid biosynthesis; L-lysine biosynthesis via DAP pathway; LL-2,6-diaminopimelate from (S)-tetrahydrodipicolinate (succinylase route): step 3/3. Its function is as follows. Catalyzes the hydrolysis of N-succinyl-L,L-diaminopimelic acid (SDAP), forming succinate and LL-2,6-diaminopimelate (DAP), an intermediate involved in the bacterial biosynthesis of lysine and meso-diaminopimelic acid, an essential component of bacterial cell walls. The chain is Succinyl-diaminopimelate desuccinylase from Actinobacillus pleuropneumoniae serotype 3 (strain JL03).